The primary structure comprises 296 residues: Ribosomal RNA small subunit methyltransferase A (296 aa).

S-adenosyl-L-methionine-binding residues include Asn-32, Leu-34, Gly-59, Glu-80, Asp-105, and Asn-130.

This sequence belongs to the class I-like SAM-binding methyltransferase superfamily. rRNA adenine N(6)-methyltransferase family. RsmA subfamily.

The protein localises to the cytoplasm. The enzyme catalyses adenosine(1518)/adenosine(1519) in 16S rRNA + 4 S-adenosyl-L-methionine = N(6)-dimethyladenosine(1518)/N(6)-dimethyladenosine(1519) in 16S rRNA + 4 S-adenosyl-L-homocysteine + 4 H(+). In terms of biological role, specifically dimethylates two adjacent adenosines (A1518 and A1519) in the loop of a conserved hairpin near the 3'-end of 16S rRNA in the 30S particle. May play a critical role in biogenesis of 30S subunits. This chain is Ribosomal RNA small subunit methyltransferase A, found in Lactiplantibacillus plantarum (strain ATCC BAA-793 / NCIMB 8826 / WCFS1) (Lactobacillus plantarum).